The primary structure comprises 256 residues: Complex I assembly factor TIMMDC1, mitochondrial (256 aa).

Positions 1 to 27 are disordered; the sequence is MAQSDPPKSPDPPLPTSIRNPQTPESG. Transmembrane regions (helical) follow at residues 111–131 and 159–179; these read WGWR…GLTV and VGLL…GALI.

The protein belongs to the Tim17/Tim22/Tim23 family. Associates with the intermediate 315 kDa subcomplex of incompletely assembled complex I.

The protein localises to the mitochondrion membrane. Functionally, chaperone protein involved in the assembly of the mitochondrial NADH:ubiquinone oxidoreductase complex (complex I). Participates in constructing the membrane arm of complex I. The protein is Complex I assembly factor TIMMDC1, mitochondrial (timmdc1) of Xenopus laevis (African clawed frog).